Consider the following 20-residue polypeptide: ATP synthase subunit beta, chloroplastic (20 aa).

Positions 1-10 (METTNESLGY) are enriched in polar residues. The segment at 1–20 (METTNESLGYTDQIIGPVLD) is disordered.

Belongs to the ATPase alpha/beta chains family. F-type ATPases have 2 components, CF(1) - the catalytic core - and CF(0) - the membrane proton channel. CF(1) has five subunits: alpha(3), beta(3), gamma(1), delta(1), epsilon(1). CF(0) has four main subunits: a(1), b(1), b'(1) and c(9-12).

Its subcellular location is the plastid. It localises to the chloroplast thylakoid membrane. The enzyme catalyses ATP + H2O + 4 H(+)(in) = ADP + phosphate + 5 H(+)(out). Its function is as follows. Produces ATP from ADP in the presence of a proton gradient across the membrane. The catalytic sites are hosted primarily by the beta subunits. The sequence is that of ATP synthase subunit beta, chloroplastic from Chattonella marina var. antiqua (Red tide flagellate).